The chain runs to 300 residues: Probable membrane transporter protein YtnM (300 aa).

Helical transmembrane passes span 4–24, 33–53, 76–96, 102–122, 139–159, 206–226, 231–251, and 260–280; these read LIVFAFIGLLSQLIDGSLGMA, LLAFGITPAVASASVHLAEVV, LVIPGSIGAFLGAAFLSQLPG, YISLFLLLLGGYVLIRFLFQY, IPLGVIAGFADATGGGGWGPV, LWVFSLMAGGIIAAPIAAWLV, PQLMGVLVGGFIILVNARTLI, and VHPLIYTAIGAIWLSAVLFVL.

Belongs to the 4-toluene sulfonate uptake permease (TSUP) (TC 2.A.102) family.

It localises to the cell membrane. The polypeptide is Probable membrane transporter protein YtnM (ytnM) (Bacillus subtilis (strain 168)).